Reading from the N-terminus, the 331-residue chain is 6-phosphogluconolactonase (331 aa).

The protein belongs to the cycloisomerase 2 family.

The enzyme catalyses 6-phospho-D-glucono-1,5-lactone + H2O = 6-phospho-D-gluconate + H(+). The protein operates within carbohydrate degradation; pentose phosphate pathway; D-ribulose 5-phosphate from D-glucose 6-phosphate (oxidative stage): step 2/3. Catalyzes the hydrolysis of 6-phosphogluconolactone to 6-phosphogluconate. In Serratia proteamaculans (strain 568), this protein is 6-phosphogluconolactonase.